We begin with the raw amino-acid sequence, 88 residues long: Otospiralin (88 aa).

Positions 1 to 21 (MQACMVPGLALCLLLGSLTEA) are cleaved as a signal peptide.

Belongs to the otospiralin family. Ear specific.

It is found in the secreted. In terms of biological role, may be essential for the survival of the neurosensory epithelium of the inner ear. The polypeptide is Otospiralin (OTOS) (Cavia porcellus (Guinea pig)).